Reading from the N-terminus, the 601-residue chain is Elongation factor 4 (601 aa).

Residues 5-187 (ENIRNFCIIA…AIVHHLPAPK (183 aa)) enclose the tr-type G domain. Residues 17–22 (DHGKST) and 134–137 (NKID) each bind GTP.

The protein belongs to the TRAFAC class translation factor GTPase superfamily. Classic translation factor GTPase family. LepA subfamily.

The protein localises to the cell inner membrane. It catalyses the reaction GTP + H2O = GDP + phosphate + H(+). Functionally, required for accurate and efficient protein synthesis under certain stress conditions. May act as a fidelity factor of the translation reaction, by catalyzing a one-codon backward translocation of tRNAs on improperly translocated ribosomes. Back-translocation proceeds from a post-translocation (POST) complex to a pre-translocation (PRE) complex, thus giving elongation factor G a second chance to translocate the tRNAs correctly. Binds to ribosomes in a GTP-dependent manner. The polypeptide is Elongation factor 4 (Desulfovibrio desulfuricans (strain ATCC 27774 / DSM 6949 / MB)).